The primary structure comprises 208 residues: Cytochrome c oxidase assembly protein CtaG (208 aa).

Topologically, residues M1 to G19 are cytoplasmic. The chain crosses the membrane as a helical; Signal-anchor for type II membrane protein span at residues H20–A42. The Periplasmic segment spans residues V43–L208.

This sequence belongs to the COX11/CtaG family.

It is found in the cell inner membrane. In terms of biological role, exerts its effect at some terminal stage of cytochrome c oxidase synthesis, probably by being involved in the insertion of the copper B into subunit I. The polypeptide is Cytochrome c oxidase assembly protein CtaG (Rhodopseudomonas palustris (strain TIE-1)).